We begin with the raw amino-acid sequence, 650 residues long: Serine/threonine-protein phosphatase with EF-hands 1 (650 aa).

One can recognise an IQ domain in the interval 16–45; it reads VIKAALVIQNWYRRYRARLRVRQHYALAIF. The interval 124 to 456 is catalytic; sequence IHILLQAFKQ…PQFFQYQVTS (333 aa). Positions 175, 177, 204, and 236 each coordinate Mn(2+). The Proton donor role is filled by His237. A Mn(2+)-binding site is contributed by His288. Residues 315–348 are disordered; it reads PVLGNQETGEKRNKSASNYVEPRKVEPDKTPSED. Over residues 335-348 the composition is skewed to basic and acidic residues; the sequence is EPRKVEPDKTPSED. A Mn(2+)-binding site is contributed by His404. EF-hand domains follow at residues 484-519, 567-602, and 607-642; these read SRKT…ILGL, RYRS…FNAH, and IDDS…VHKY. The Ca(2+) site is built by Asp497, Ser499, Ser501, Arg503, Glu508, Asp580, Asp582, Ser584, Glu591, Asp620, Asn622, Asp624, Asn626, and Glu631.

It belongs to the PPP phosphatase family. Requires Mn(2+) as cofactor. Mg(2+) is required as a cofactor. In the embryo it is almost exclusively expressed in the peripheral nervous system, within sensory neurons of cranial and dorsal root ganglia. Otherwise found in fetal inner ear and a small group of neurons in the midbrain/pons junction.

It carries out the reaction O-phospho-L-seryl-[protein] + H2O = L-seryl-[protein] + phosphate. It catalyses the reaction O-phospho-L-threonyl-[protein] + H2O = L-threonyl-[protein] + phosphate. With respect to regulation, activated by calcium. May have a role in the recovery or adaptation response of photoreceptors. May have a role in diverse sensory neurons and in development. The protein is Serine/threonine-protein phosphatase with EF-hands 1 (Ppef1) of Mus musculus (Mouse).